We begin with the raw amino-acid sequence, 224 residues long: MATSMIQRLFKQGTKIVGVGLNYASHAKELGNALPKDPIVFLKPTSSYLENGGTIEIPHPLDSLHHEVELAVVIGQKARDVPERLAMNYIGGYALALDMTARELQVSAMASGLPCTLAKGQDTFTPISSVLPKAMVLDPNNLELWLKVDDETRQKGWTKDMIFKVPYLISYISSVMTLFKGDVILTGTPEGIGPVKIGQKITAGITGLSEVQFDVGRRLKPLLR.

A mitochondrion-targeting transit peptide spans 1–30; that stretch reads MATSMIQRLFKQGTKIVGVGLNYASHAKEL. Mg(2+)-binding residues include glutamate 67, glutamate 69, and aspartate 98.

The protein belongs to the FAH family. It depends on Mg(2+) as a cofactor. Mn(2+) is required as a cofactor.

The protein localises to the mitochondrion. It catalyses the reaction oxaloacetate = enol-oxaloacetate. In terms of biological role, tautomerase that converts enol-oxaloacetate, a strong inhibitor of succinate dehydrogenase, to the physiological keto form of oxaloacetate. This is Oxaloacetate tautomerase FAHD2, mitochondrial from Arabidopsis thaliana (Mouse-ear cress).